We begin with the raw amino-acid sequence, 352 residues long: Peptide chain release factor 1 (352 aa).

Gln-233 is subject to N5-methylglutamine. The tract at residues 288–309 is disordered; the sequence is NAKDRKEQVGSGDRSERIRTYN. Residues 289-306 show a composition bias toward basic and acidic residues; the sequence is AKDRKEQVGSGDRSERIR.

The protein belongs to the prokaryotic/mitochondrial release factor family. Methylated by PrmC. Methylation increases the termination efficiency of RF1.

Its subcellular location is the cytoplasm. In terms of biological role, peptide chain release factor 1 directs the termination of translation in response to the peptide chain termination codons UAG and UAA. This Helicobacter pylori (strain HPAG1) protein is Peptide chain release factor 1.